The following is a 334-amino-acid chain: MLEIDGSFGEGGGQILRSSLALSSLTGKGFRIRGIRAKRKNPGLQPQHLTSVRVMKMLTNARVSGDYLGSTELEFEPGEVVEGSFTVDVGTAGSVSLIAMTAIPLMINRRISLRIRGGTDVPLSPPVDYMRLVFIPLLEKMGITGKIEVKRRGHYPEGGGEVEVYGFRGEPRDLVLDSFGELREITGVSHVTSLPAHIAKRQIQGVMEVLREFNVPVKVEEEVSNEGSRGTGIVLSAHGLSIMGASSLGEKGITAENVGRKAGTELLKELKTGAAVDSHMGDMLVTFSAFANLEYTGSLLTQHTETNIEVIRKFLEIDVKIEGRSPFKLRLKRK.

An ATP-binding site is contributed by 279–282; that stretch reads HMGD. The Tele-AMP-histidine intermediate role is filled by histidine 303.

Belongs to the RNA 3'-terminal cyclase family. Type 1 subfamily.

It is found in the cytoplasm. The catalysed reaction is a 3'-end 3'-phospho-ribonucleotide-RNA + ATP = a 3'-end 2',3'-cyclophospho-ribonucleotide-RNA + AMP + diphosphate. Its function is as follows. Catalyzes the conversion of 3'-phosphate to a 2',3'-cyclic phosphodiester at the end of RNA. The mechanism of action of the enzyme occurs in 3 steps: (A) adenylation of the enzyme by ATP; (B) transfer of adenylate to an RNA-N3'P to produce RNA-N3'PP5'A; (C) and attack of the adjacent 2'-hydroxyl on the 3'-phosphorus in the diester linkage to produce the cyclic end product. The biological role of this enzyme is unknown but it is likely to function in some aspects of cellular RNA processing. The polypeptide is RNA 3'-terminal phosphate cyclase (Metallosphaera sedula (strain ATCC 51363 / DSM 5348 / JCM 9185 / NBRC 15509 / TH2)).